The primary structure comprises 200 residues: Pyridoxal 5'-phosphate synthase subunit PdxT (200 aa).

Residue 52–54 (GES) participates in L-glutamine binding. The Nucleophile role is filled by Cys84. L-glutamine contacts are provided by residues Arg116 and 145-146 (IR). Active-site charge relay system residues include His181 and Glu183.

The protein belongs to the glutaminase PdxT/SNO family. In terms of assembly, in the presence of PdxS, forms a dodecamer of heterodimers. Only shows activity in the heterodimer.

It carries out the reaction aldehydo-D-ribose 5-phosphate + D-glyceraldehyde 3-phosphate + L-glutamine = pyridoxal 5'-phosphate + L-glutamate + phosphate + 3 H2O + H(+). It catalyses the reaction L-glutamine + H2O = L-glutamate + NH4(+). Its pathway is cofactor biosynthesis; pyridoxal 5'-phosphate biosynthesis. Its function is as follows. Catalyzes the hydrolysis of glutamine to glutamate and ammonia as part of the biosynthesis of pyridoxal 5'-phosphate. The resulting ammonia molecule is channeled to the active site of PdxS. The protein is Pyridoxal 5'-phosphate synthase subunit PdxT of Sulfolobus acidocaldarius (strain ATCC 33909 / DSM 639 / JCM 8929 / NBRC 15157 / NCIMB 11770).